A 185-amino-acid chain; its full sequence is Ribosome-recycling factor (185 aa).

The interval 135–159 is disordered; sequence ANDKLKASEKNKEASEDEVKRAQEK.

Belongs to the RRF family.

It is found in the cytoplasm. Functionally, responsible for the release of ribosomes from messenger RNA at the termination of protein biosynthesis. May increase the efficiency of translation by recycling ribosomes from one round of translation to another. The polypeptide is Ribosome-recycling factor (Moorella thermoacetica (strain ATCC 39073 / JCM 9320)).